The primary structure comprises 394 residues: tRNA-specific 2-thiouridylase MnmA (394 aa).

ATP-binding positions include glycine 13–serine 20 and methionine 39. The interaction with target base in tRNA stretch occupies residues asparagine 99–aspartate 101. Catalysis depends on cysteine 104, which acts as the Nucleophile. Residues cysteine 104 and cysteine 202 are joined by a disulfide bond. An ATP-binding site is contributed by glycine 128. Positions lysine 152–glutamine 154 are interaction with tRNA. Cysteine 202 (cysteine persulfide intermediate) is an active-site residue. The interval arginine 329–tyrosine 330 is interaction with tRNA.

Belongs to the MnmA/TRMU family.

It localises to the cytoplasm. The catalysed reaction is S-sulfanyl-L-cysteinyl-[protein] + uridine(34) in tRNA + AH2 + ATP = 2-thiouridine(34) in tRNA + L-cysteinyl-[protein] + A + AMP + diphosphate + H(+). Its function is as follows. Catalyzes the 2-thiolation of uridine at the wobble position (U34) of tRNA, leading to the formation of s(2)U34. This is tRNA-specific 2-thiouridylase MnmA from Polaromonas naphthalenivorans (strain CJ2).